The chain runs to 463 residues: Mitochondrial dynamics protein MID51 (463 aa).

Topologically, residues 1 to 23 (MAGAGERKGKKDDNGIGTAIDFV) are mitochondrial intermembrane. The chain crosses the membrane as a helical span at residues 24–46 (LSNARLVLGVGGAAMLGIATLAV). The Cytoplasmic portion of the chain corresponds to 47–463 (KRMYDRAISA…LSEPEVLLQT (417 aa)). The dimerization stretch occupies residues 49-195 (MYDRAISAPT…LSGSLYDDLQ (147 aa)). Residues S55, S59, S79, and S94 each carry the phosphoserine modification. The segment at 57 to 79 (PTSPTRLSHSGKRSWEEPNWMGS) is disordered. The disordered stretch occupies residues 104-123 (AFDTDTFCPPRPKPVARKGQ). The interval 160–169 (AAVDICAELR) is important for interaction with DNM1L. Residues S187, S189, and H201 each contribute to the ADP site. An important for interaction with DNM1L region spans residues 234–243 (RRENPEYFPR). 3 residues coordinate ADP: S340, R342, and K368.

It belongs to the MID49/MID51 family. As to quaternary structure, homodimer. Interacts with DNM1L.

It localises to the mitochondrion outer membrane. Functionally, mitochondrial outer membrane protein which regulates mitochondrial fission/fusion dynamics. Promotes the recruitment and association of the fission mediator dynamin-related protein 1 (DNM1L) to the mitochondrial surface independently of the mitochondrial fission FIS1 and MFF proteins. Regulates DNM1L GTPase activity and DNM1L oligomerization. Binds ADP and can also bind GDP, although with lower affinity. Does not bind CDP, UDP, ATP, AMP or GTP. Inhibits DNM1L GTPase activity in the absence of bound ADP. Requires ADP to stimulate DNM1L GTPase activity and the assembly of DNM1L into long, oligomeric tubules with a spiral pattern, as opposed to the ring-like DNM1L oligomers observed in the absence of bound ADP. Does not require ADP for its function in recruiting DNM1L. This chain is Mitochondrial dynamics protein MID51 (MIEF1), found in Pongo abelii (Sumatran orangutan).